The chain runs to 547 residues: Putative cysteine ligase BshC (547 aa).

The stretch at 461–504 (ASTEATRSAIMDEMEALKQKVVRAEKRQQDEVRAQLKKAHTNLR) forms a coiled coil.

Belongs to the BshC family.

The chain is Putative cysteine ligase BshC from Salinibacter ruber (strain DSM 13855 / M31).